The following is a 387-amino-acid chain: MATTKSFLILIVMILATTSSTFASLEEMVTVLSIDGGGIKGIIPGTILEFLEGQLQKMDNNADARLADYFDVIGGTSTGGLLTAMITTPNENNRPFAAANEIVPFYFEHGPHIFNSSTGQFFGPKYDGKYLMQVLQEKLGETRVHQALTEVAISSFDIKTNKPVIFTKSNLAKSPELDAKMYDICYSTAAAPTYFPPHYFATNTINGDKYEFNLVDGAVATVADPALLSVSVATRRAQEDPAFASIRSLNYKKMLLLSLGTGTTSEFDKTHTAEETAKWGALQWMLVIQQMTEAASSYMTDYYLSTVFQDLHSQNNYLRVQENALTGTTTKADDASEANMELLAQVGENLLKKPVSKDNPETYEEALKRFAKLLSDRKKLRANKASY.

The signal sequence occupies residues 1 to 23 (MATTKSFLILIVMILATTSSTFA). In terms of domain architecture, PNPLA spans 32–230 (LSIDGGGIKG…TVADPALLSV (199 aa)). Positions 36–41 (GGGIKG) match the GXGXXG motif. The GXSXG signature appears at 75 to 79 (GTSTG). Ser-77 (nucleophile) is an active-site residue. N-linked (GlcNAc...) asparagine glycosylation is present at Asn-115. The active-site Proton acceptor is Asp-216. The short motif at 216–218 (DGA) is the DGA/G element. Residues 361-385 (ETYEEALKRFAKLLSDRKKLRANKA) adopt a coiled-coil conformation.

Belongs to the patatin family. Tuber and stolon.

It localises to the vacuole. Its function is as follows. Probable lipolytic acyl hydrolase (LAH), an activity which is thought to be involved in the response of tubers to pathogens. The protein is Patatin-02 of Solanum tuberosum (Potato).